Reading from the N-terminus, the 158-residue chain is Troponin C, isoform 1 (158 aa).

An N-acetylserine modification is found at serine 1. 4 consecutive EF-hand domains span residues 15–50 (EQIV…MGIK), 51–86 (VSST…FLIE), 91–126 (AMMK…LDAR), and 127–158 (LTAE…MMTG). The Ca(2+) site is built by aspartate 64, aspartate 66, serine 68, glutamine 70, and glutamate 75. 5 residues coordinate Ca(2+): aspartate 140, aspartate 142, serine 144, threonine 146, and glutamate 151.

The protein belongs to the troponin C family.

Its function is as follows. Troponin is the central regulatory protein of striated muscle contraction. Tn consists of three components: Tn-I which is the inhibitor of actomyosin ATPase, Tn-T which contains the binding site for tropomyosin and Tn-C. The binding of calcium to Tn-C abolishes the inhibitory action of Tn on actin filaments. This chain is Troponin C, isoform 1, found in Balanus nubilus (Giant acorn barnacle).